The chain runs to 85 residues: Platelet factor 4 (85 aa).

2 disulfide bridges follow: cysteine 25-cysteine 51 and cysteine 27-cysteine 67. Serine 41 bears the Phosphoserine mark. 76-82 (KKIIKRL) is a heparin binding site.

Belongs to the intercrine alpha (chemokine CxC) family. Homotetramer. Interacts with TNFAIP6 (via Link domain). Interacts with CCR1. Interacts with CXCR3. Interacts with THBD; this interaction enhances generation of activated protein C.

It is found in the secreted. Functionally, chemokine released during platelet aggregation that plays a role in different biological processes including hematopoiesis, cell proliferation, differentiation, and activation. Acts via different functional receptors including CCR1, CXCR3A or CXCR3B. Upon interaction with CXCR3A receptor, induces activated T-lymphocytes migration mediated via downstream Ras/extracellular signal-regulated kinase (ERK) signaling. Neutralizes the anticoagulant effect of heparin by binding more strongly to heparin than to the chondroitin-4-sulfate chains of the carrier molecule. Plays a role in the inhibition of hematopoiesis and in the maintenance of hematopoietic stem cell (HSC) quiescence. Chemotactic for neutrophils and monocytes via CCR1. Inhibits endothelial cell proliferation. In cooperation with toll-like receptor 8/TLR8, induces chromatin remodeling and activates inflammatory gene expression via the TBK1-IRF5 axis. In addition, induces myofibroblast differentiation and collagen synthesis in different precursor cells, including endothelial cells, by stimulating endothelial-to-mesenchymal transition. Interacts with thrombomodulin/THBD to enhance the activation of protein C and thus potentiates its anticoagulant activity. This is Platelet factor 4 (PF4) from Ovis aries (Sheep).